The chain runs to 151 residues: Inorganic triphosphatase (151 aa).

The CYTH domain maps to 1–148 (MTEIERKFLV…KRYKNKALAL (148 aa)). Catalysis depends on Y27, which acts as the Proton acceptor.

Homodimer.

The catalysed reaction is triphosphate + H2O = phosphate + diphosphate. Activated by magnesium and mangenese ions, and inhibited by calcium, zinc and copper ions. Its function is as follows. Involved in the hydrolysis of the beta-gamma-phosphoanhydride linkage of triphosphate-containing substrates (inorganic or nucleoside-linked). Catalyzes the hydrolysis of inorganic triphosphate (PPPi). The enzyme has a strong preference for linear PPPi compared with cyclic PPPi (cyclic trimetaphosphate) and to the linear P4. The longer chains polyphosphate are not hydrolyzed. It has only a slight thiamine triphosphatase (ThTPase) activity. Nucleoside triphosphatase activity is negligible in the presence of magnesium, but a small activity is observed in the presence of manganese, in particular with GTP. In Nitrosomonas europaea (strain ATCC 19718 / CIP 103999 / KCTC 2705 / NBRC 14298), this protein is Inorganic triphosphatase.